The chain runs to 297 residues: ATP synthase gamma chain (297 aa).

It belongs to the ATPase gamma chain family. As to quaternary structure, F-type ATPases have 2 components, CF(1) - the catalytic core - and CF(0) - the membrane proton channel. CF(1) has five subunits: alpha(3), beta(3), gamma(1), delta(1), epsilon(1). CF(0) has three main subunits: a, b and c.

It localises to the cell membrane. Produces ATP from ADP in the presence of a proton gradient across the membrane. The gamma chain is believed to be important in regulating ATPase activity and the flow of protons through the CF(0) complex. This Beutenbergia cavernae (strain ATCC BAA-8 / DSM 12333 / CCUG 43141 / JCM 11478 / NBRC 16432 / NCIMB 13614 / HKI 0122) protein is ATP synthase gamma chain.